The chain runs to 178 residues: Photosystem I assembly protein Ycf4 (178 aa).

2 consecutive transmembrane segments (helical) span residues 19–39 and 61–81; these read ILVALMVTIGGIGFLFASLSS and LIMGLYSLAAALLASYLWAVI.

Belongs to the Ycf4 family.

It is found in the cellular thylakoid membrane. Its function is as follows. Seems to be required for the assembly of the photosystem I complex. In Synechococcus sp. (strain CC9311), this protein is Photosystem I assembly protein Ycf4.